Here is a 413-residue protein sequence, read N- to C-terminus: Gamma-glutamyl phosphate reductase (413 aa).

It belongs to the gamma-glutamyl phosphate reductase family.

The protein resides in the cytoplasm. The catalysed reaction is L-glutamate 5-semialdehyde + phosphate + NADP(+) = L-glutamyl 5-phosphate + NADPH + H(+). Its pathway is amino-acid biosynthesis; L-proline biosynthesis; L-glutamate 5-semialdehyde from L-glutamate: step 2/2. Catalyzes the NADPH-dependent reduction of L-glutamate 5-phosphate into L-glutamate 5-semialdehyde and phosphate. The product spontaneously undergoes cyclization to form 1-pyrroline-5-carboxylate. In Rhodococcus jostii (strain RHA1), this protein is Gamma-glutamyl phosphate reductase.